We begin with the raw amino-acid sequence, 906 residues long: Protein translocase subunit SecA (906 aa).

ATP-binding positions include glutamine 86, 104–108 (GEGKT), and aspartate 511. A compositionally biased stretch (basic and acidic residues) spans 852 to 888 (EHESVIDNNQRHDEDEQEEAPKVKQVRREGPKVKRND). Residues 852 to 906 (EHESVIDNNQRHDEDEQEEAPKVKQVRREGPKVKRNDPCPCGSGKKYKQCHSKVE) form a disordered region. Positions 890, 892, 901, and 902 each coordinate Zn(2+). A compositionally biased stretch (basic residues) spans 896 to 906 (KKYKQCHSKVE).

Belongs to the SecA family. Monomer and homodimer. Part of the essential Sec protein translocation apparatus which comprises SecA, SecYEG and auxiliary proteins SecDF-YajC and YidC. The cofactor is Zn(2+).

The protein localises to the cell inner membrane. It is found in the cytoplasm. The catalysed reaction is ATP + H2O + cellular proteinSide 1 = ADP + phosphate + cellular proteinSide 2.. Part of the Sec protein translocase complex. Interacts with the SecYEG preprotein conducting channel. Has a central role in coupling the hydrolysis of ATP to the transfer of proteins into and across the cell membrane, serving both as a receptor for the preprotein-SecB complex and as an ATP-driven molecular motor driving the stepwise translocation of polypeptide chains across the membrane. This chain is Protein translocase subunit SecA, found in Francisella tularensis subsp. tularensis (strain SCHU S4 / Schu 4).